The sequence spans 493 residues: Galactose-1-phosphate uridylyltransferase (493 aa).

Belongs to the galactose-1-phosphate uridylyltransferase type 2 family.

It localises to the cytoplasm. The catalysed reaction is alpha-D-galactose 1-phosphate + UDP-alpha-D-glucose = alpha-D-glucose 1-phosphate + UDP-alpha-D-galactose. The protein operates within carbohydrate metabolism; galactose metabolism. This chain is Galactose-1-phosphate uridylyltransferase (galT), found in Streptococcus thermophilus.